Reading from the N-terminus, the 40-residue chain is Photosystem II reaction center protein X (40 aa).

Residues 10-30 form a helical membrane-spanning segment; that stretch reads WSLVWGTVIVVIPVTVGLVFI.

Belongs to the PsbX family. Type 1 subfamily. In terms of assembly, PSII is composed of 1 copy each of membrane proteins PsbA, PsbB, PsbC, PsbD, PsbE, PsbF, PsbH, PsbI, PsbJ, PsbK, PsbL, PsbM, PsbT, PsbX, PsbY, PsbZ, Psb30/Ycf12, peripheral proteins PsbO, CyanoQ (PsbQ), PsbU, PsbV and a large number of cofactors. It forms dimeric complexes.

Its subcellular location is the cellular thylakoid membrane. Its function is as follows. Involved in the binding and/or turnover of quinones at the Q(B) site of photosystem II (PSII). PSII is a light-driven water plastoquinone oxidoreductase, using light energy to abstract electrons from H(2)O, generating a proton gradient subsequently used for ATP formation. This Crocosphaera subtropica (strain ATCC 51142 / BH68) (Cyanothece sp. (strain ATCC 51142)) protein is Photosystem II reaction center protein X.